Here is a 146-residue protein sequence, read N- to C-terminus: Leghemoglobin Lb120-8 (146 aa).

The 145-residue stretch at 2 to 146 (GFTEKQEALV…LASAIKKAMN (145 aa)) folds into the Globin domain. 2 positions are modified to nitrated tyrosine: Y24 and Y29. A heme b-binding site is contributed by S44. S44 is subject to Phosphoserine. O2 is bound at residue H61. K64, H93, and K96 together coordinate heme b. A Nitrated tyrosine modification is found at Y134.

Belongs to the plant globin family. Monomer. Nitrated in effective nodules and particularly in hypoxic conditions; this mechanism may play a protective role in the symbiosis by buffering toxic peroxynitrite NO(2)(-). Nitration level decrease during nodule senescence. In terms of processing, phosphorylation at Ser-44 disrupts the molecular environment of its porphyrin ring oxygen binding pocket, thus leading to a reduced oxygen consumption and to the delivery of oxygen O(2) to symbiosomes. In terms of tissue distribution, root nodules.

Its subcellular location is the cytoplasm. The protein localises to the cytosol. The protein resides in the nucleus. Functionally, leghemoglobin that reversibly binds oxygen O(2) through a pentacoordinated heme iron. In root nodules, facilitates the diffusion of oxygen to the bacteroids while preventing the bacterial nitrogenase from being inactivated by buffering dioxygen, nitric oxide and carbon monoxide, and promoting the formation of reactive oxygen species (ROS, e.g. H(2)O(2)). This role is essential for symbiotic nitrogen fixation (SNF). This chain is Leghemoglobin Lb120-8, found in Pisum sativum (Garden pea).